Reading from the N-terminus, the 249-residue chain is Small ribosomal subunit protein uS2 (249 aa).

This sequence belongs to the universal ribosomal protein uS2 family.

This Bordetella parapertussis (strain 12822 / ATCC BAA-587 / NCTC 13253) protein is Small ribosomal subunit protein uS2.